Consider the following 320-residue polypeptide: Lipoyl synthase (320 aa).

Residues Cys-67, Cys-72, Cys-78, Cys-93, Cys-97, Cys-100, and Ser-307 each contribute to the [4Fe-4S] cluster site. One can recognise a Radical SAM core domain in the interval 79–296; it reads FNHGTATFMI…RDKANEMGFE (218 aa).

The protein belongs to the radical SAM superfamily. Lipoyl synthase family. The cofactor is [4Fe-4S] cluster.

It localises to the cytoplasm. The catalysed reaction is [[Fe-S] cluster scaffold protein carrying a second [4Fe-4S](2+) cluster] + N(6)-octanoyl-L-lysyl-[protein] + 2 oxidized [2Fe-2S]-[ferredoxin] + 2 S-adenosyl-L-methionine + 4 H(+) = [[Fe-S] cluster scaffold protein] + N(6)-[(R)-dihydrolipoyl]-L-lysyl-[protein] + 4 Fe(3+) + 2 hydrogen sulfide + 2 5'-deoxyadenosine + 2 L-methionine + 2 reduced [2Fe-2S]-[ferredoxin]. It participates in protein modification; protein lipoylation via endogenous pathway; protein N(6)-(lipoyl)lysine from octanoyl-[acyl-carrier-protein]: step 2/2. In terms of biological role, catalyzes the radical-mediated insertion of two sulfur atoms into the C-6 and C-8 positions of the octanoyl moiety bound to the lipoyl domains of lipoate-dependent enzymes, thereby converting the octanoylated domains into lipoylated derivatives. In Haemophilus influenzae (strain ATCC 51907 / DSM 11121 / KW20 / Rd), this protein is Lipoyl synthase.